The primary structure comprises 229 residues: 3-isopropylmalate dehydratase small subunit (229 aa).

Residues L198–I229 form a disordered region. Residues V200–E215 show a composition bias toward basic and acidic residues.

This sequence belongs to the LeuD family. LeuD type 1 subfamily. Heterodimer of LeuC and LeuD.

It carries out the reaction (2R,3S)-3-isopropylmalate = (2S)-2-isopropylmalate. Its pathway is amino-acid biosynthesis; L-leucine biosynthesis; L-leucine from 3-methyl-2-oxobutanoate: step 2/4. Catalyzes the isomerization between 2-isopropylmalate and 3-isopropylmalate, via the formation of 2-isopropylmaleate. This is 3-isopropylmalate dehydratase small subunit from Bifidobacterium adolescentis (strain ATCC 15703 / DSM 20083 / NCTC 11814 / E194a).